A 479-amino-acid polypeptide reads, in one-letter code: UDP-N-acetylmuramoyl-L-alanyl-D-glutamate--2,6-diaminopimelate ligase (479 aa).

S21 contacts UDP-N-acetyl-alpha-D-muramoyl-L-alanyl-D-glutamate. ATP is bound at residue 98 to 104 (GTNGKSS). Residues 144 to 145 (TT), S171, Q177, and R179 contribute to the UDP-N-acetyl-alpha-D-muramoyl-L-alanyl-D-glutamate site. The residue at position 211 (K211) is an N6-carboxylysine. Residues R372, 396-399 (DNPR), G446, and E450 contribute to the meso-2,6-diaminopimelate site. The Meso-diaminopimelate recognition motif signature appears at 396–399 (DNPR).

The protein belongs to the MurCDEF family. MurE subfamily. Mg(2+) serves as cofactor. Post-translationally, carboxylation is probably crucial for Mg(2+) binding and, consequently, for the gamma-phosphate positioning of ATP.

The protein localises to the cytoplasm. The catalysed reaction is UDP-N-acetyl-alpha-D-muramoyl-L-alanyl-D-glutamate + meso-2,6-diaminopimelate + ATP = UDP-N-acetyl-alpha-D-muramoyl-L-alanyl-gamma-D-glutamyl-meso-2,6-diaminopimelate + ADP + phosphate + H(+). The protein operates within cell wall biogenesis; peptidoglycan biosynthesis. Its function is as follows. Catalyzes the addition of meso-diaminopimelic acid to the nucleotide precursor UDP-N-acetylmuramoyl-L-alanyl-D-glutamate (UMAG) in the biosynthesis of bacterial cell-wall peptidoglycan. This chain is UDP-N-acetylmuramoyl-L-alanyl-D-glutamate--2,6-diaminopimelate ligase, found in Rickettsia rickettsii.